Here is a 104-residue protein sequence, read N- to C-terminus: Large ribosomal subunit protein bL21 (104 aa).

It belongs to the bacterial ribosomal protein bL21 family. As to quaternary structure, part of the 50S ribosomal subunit. Contacts protein L20.

This protein binds to 23S rRNA in the presence of protein L20. The protein is Large ribosomal subunit protein bL21 of Allorhizobium ampelinum (strain ATCC BAA-846 / DSM 112012 / S4) (Agrobacterium vitis (strain S4)).